The following is a 263-amino-acid chain: Proteasome subunit alpha (263 aa).

Residues Ala229–Ser263 form a disordered region.

It belongs to the peptidase T1A family. In terms of assembly, the 20S proteasome core is composed of 14 alpha and 14 beta subunits that assemble into four stacked heptameric rings, resulting in a barrel-shaped structure. The two inner rings, each composed of seven catalytic beta subunits, are sandwiched by two outer rings, each composed of seven alpha subunits. The catalytic chamber with the active sites is on the inside of the barrel. Has a gated structure, the ends of the cylinder being occluded by the N-termini of the alpha-subunits. Is capped by the proteasome-associated ATPase, ARC.

Its subcellular location is the cytoplasm. Its pathway is protein degradation; proteasomal Pup-dependent pathway. With respect to regulation, the formation of the proteasomal ATPase ARC-20S proteasome complex, likely via the docking of the C-termini of ARC into the intersubunit pockets in the alpha-rings, may trigger opening of the gate for substrate entry. Interconversion between the open-gate and close-gate conformations leads to a dynamic regulation of the 20S proteasome proteolysis activity. Its function is as follows. Component of the proteasome core, a large protease complex with broad specificity involved in protein degradation. This chain is Proteasome subunit alpha, found in Actinosynnema mirum (strain ATCC 29888 / DSM 43827 / JCM 3225 / NBRC 14064 / NCIMB 13271 / NRRL B-12336 / IMRU 3971 / 101).